Here is a 118-residue protein sequence, read N- to C-terminus: V-type proton ATPase subunit G 2 (118 aa).

Residues 23–90 are disordered; the sequence is ADARKRKARR…VQGMQSSQQR (68 aa). A compositionally biased stretch (basic and acidic residues) spans 35–55; it reads QAKEEAQMEVEQYRREREQEF. Polar residues-rich tracts occupy residues 56 to 69 and 78 to 89; these read QSKQQAAMGSQGNL and RRQVQGMQSSQQ.

This sequence belongs to the V-ATPase G subunit family. As to quaternary structure, V-ATPase is a heteromultimeric enzyme made up of two complexes: the ATP-hydrolytic V1 complex and the proton translocation V0 complex. The V1 complex consists of three catalytic AB heterodimers that form a heterohexamer, three peripheral stalks each consisting of EG heterodimers, one central rotor including subunits D and F, and the regulatory subunits C and H. The proton translocation complex V0 consists of the proton transport subunit a, a ring of proteolipid subunits c9c'', rotary subunit d, subunits e and f, and the accessory subunits ATP6AP1/Ac45 and ATP6AP2/PRR.

The protein resides in the melanosome. It is found in the cytoplasmic vesicle. The protein localises to the clathrin-coated vesicle membrane. Its function is as follows. Subunit of the V1 complex of vacuolar(H+)-ATPase (V-ATPase), a multisubunit enzyme composed of a peripheral complex (V1) that hydrolyzes ATP and a membrane integral complex (V0) that translocates protons. V-ATPase is responsible for acidifying and maintaining the pH of intracellular compartments and in some cell types, is targeted to the plasma membrane, where it is responsible for acidifying the extracellular environment. This is V-type proton ATPase subunit G 2 (ATP6V1G2) from Macaca mulatta (Rhesus macaque).